The sequence spans 311 residues: Ribosomal RNA small subunit methyltransferase H (311 aa).

Residues 33 to 35 (GGH), Asp53, Phe77, Asp98, and Gln105 contribute to the S-adenosyl-L-methionine site.

This sequence belongs to the methyltransferase superfamily. RsmH family.

The protein resides in the cytoplasm. The enzyme catalyses cytidine(1402) in 16S rRNA + S-adenosyl-L-methionine = N(4)-methylcytidine(1402) in 16S rRNA + S-adenosyl-L-homocysteine + H(+). Its function is as follows. Specifically methylates the N4 position of cytidine in position 1402 (C1402) of 16S rRNA. The chain is Ribosomal RNA small subunit methyltransferase H from Thiobacillus denitrificans (strain ATCC 25259 / T1).